The following is a 380-amino-acid chain: Protein arginine N-methyltransferase PRMT10 (380 aa).

One can recognise an SAM-dependent MTase PRMT-type domain in the interval 26–357 (EVDFANYFCT…KENHRLMDME (332 aa)). The S-adenosyl-L-methionine site is built by Gln42, Arg51, Gly75, Glu97, and Glu126. Catalysis depends on residues Glu140 and Glu149. The segment at 187–227 (ENKMEDLEIAMHDWNLFVEDTESYYGVNMNVLTKAYRAEHE) is dimerization arm.

The protein belongs to the class I-like SAM-binding methyltransferase superfamily. Protein arginine N-methyltransferase family. As to quaternary structure, ring-like homodimer.

The enzyme catalyses L-arginyl-[protein] + 2 S-adenosyl-L-methionine = N(omega),N(omega)-dimethyl-L-arginyl-[protein] + 2 S-adenosyl-L-homocysteine + 2 H(+). Methylates (mono and asymmetric dimethylation) the guanidino nitrogens of arginyl residues in some proteins. The protein is Protein arginine N-methyltransferase PRMT10 (PRMT10) of Oryza sativa subsp. japonica (Rice).